Consider the following 94-residue polypeptide: Integration host factor subunit beta (94 aa).

It belongs to the bacterial histone-like protein family. Heterodimer of an alpha and a beta chain.

This protein is one of the two subunits of integration host factor, a specific DNA-binding protein that functions in genetic recombination as well as in transcriptional and translational control. This chain is Integration host factor subunit beta, found in Brucella anthropi (strain ATCC 49188 / DSM 6882 / CCUG 24695 / JCM 21032 / LMG 3331 / NBRC 15819 / NCTC 12168 / Alc 37) (Ochrobactrum anthropi).